A 444-amino-acid polypeptide reads, in one-letter code: Adenine permease AdeQ (444 aa).

At 1–29 (MNNDNTDYVSNESGTLSRLFKLPQHGTTV) the chain is on the cytoplasmic side. A helical transmembrane segment spans residues 30–53 (RTELIAGMTTFLTMVYIVFVNPQI). At 54–63 (LGAAQMDPKV) the chain is on the periplasmic side. The chain crosses the membrane as a helical span at residues 64-82 (VFVTTCLIAGIGSIAMGIF). Topologically, residues 83-84 (AN) are cytoplasmic. The chain crosses the membrane as a discontinuously helical span at residues 85–101 (LPVALAPAMGLNAFFAF). Residues 102 to 113 (VVVGAMGISWQT) lie on the Periplasmic side of the membrane. A helical transmembrane segment spans residues 114-133 (GMGAIFWGAVGLFLLTLFRI). The Cytoplasmic portion of the chain corresponds to 134–145 (RYWMISNIPLSL). Residues 146-166 (RIGITSGIGLFIALMGLKNTG) form a helical membrane-spanning segment. Residues 167 to 182 (VIVANKDTLVMIGDLS) are Periplasmic-facing. A helical membrane pass occupies residues 183 to 200 (SHGVLLGILGFFIITVLS). Topologically, residues 201–204 (SRHF) are cytoplasmic. The chain crosses the membrane as a helical span at residues 205–223 (HAAVLVSIVVTSCCGLFFG). At 224–251 (DVHFSGVYSIPPDISGVIGEVDLSGALT) the chain is on the periplasmic side. The helical transmembrane segment at 252-280 (LELAGIIFSFMLINLFDSSGTLIGVTDKA) threads the bilayer. Residues 281–293 (GLIDGNGKFPNMN) are Cytoplasmic-facing. A helical membrane pass occupies residues 294 to 309 (KALYVDSVSSVAGAFI). Residues 310–311 (GT) lie on the Periplasmic side of the membrane. Residues 312 to 327 (SSVTAYIESTSGVAVG) traverse the membrane as a discontinuously helical segment. Over 328 to 331 (GRTG) the chain is Cytoplasmic. Residues 332 to 346 (LTAVVVGVMFLLVMF) traverse the membrane as a helical segment. The Periplasmic portion of the chain corresponds to 347–357 (FSPLVAIVPPY). The chain crosses the membrane as a helical span at residues 358–377 (ATAGALIFVGVLMTSSLARV). The Cytoplasmic portion of the chain corresponds to 378–382 (NWDDF). Residues 383 to 418 (TESVPAFITTVMMPFTFSITEGIALGFMSYCIMKVC) constitute an intramembrane region (discontinuously helical). At 419 to 444 (TGRWRDLNLCVVVVAALFALKIILVD) the chain is on the cytoplasmic side.

This sequence belongs to the nucleobase:cation symporter-2 (NCS2) (TC 2.A.40) family. Azg-like subfamily.

It localises to the cell inner membrane. In terms of biological role, high-affinity transporter for adenine. The sequence is that of Adenine permease AdeQ (adeQ) from Escherichia coli (strain K12).